The sequence spans 271 residues: Aquaporin-1 (271 aa).

At 1 to 11 (MASEFKKKIFW) the chain is on the cytoplasmic side. A helical transmembrane segment spans residues 12-29 (RAVVAEFLAMTLFIFISI). The Extracellular portion of the chain corresponds to 30–48 (GSALGFQYPVRNNQTSGAA). A glycan (N-linked (GlcNAc...) asparagine) is linked at N42. A helical transmembrane segment spans residues 49-67 (QDNVKVSLAFGLSIATLAQ). At 68–70 (SVG) the chain is on the cytoplasmic side. Residues 71–84 (HISGAHLNPAVTLG) lie within the membrane without spanning it. The NPA 1 motif lies at 78–80 (NPA). The Cytoplasmic segment spans residues 85 to 92 (LLLSCQIS). A helical transmembrane segment spans residues 93-111 (VLRAVMYIIAQCVGAIVAT). Residues 112 to 135 (AILSGITSSLPGNSLGLNSLAPGV) are Extracellular-facing. Residues 136-155 (DSGQGLGIEIIGTLQLVLCV) traverse the membrane as a helical segment. The Cytoplasmic segment spans residues 156 to 165 (LATTDRRRRD). A helical membrane pass occupies residues 166–183 (LGGSAPLAIGFSVALGHL). Over 184–188 (LAIDY) the chain is Extracellular. The stretch at 189 to 201 (TGCGINPARSFGS) is an intramembrane region. Residues 194 to 196 (NPA) carry the NPA 2 motif. Over 202–208 (AVITHNF) the chain is Extracellular. Residues 209-226 (QDHWVFWVGPFIGGALAV) traverse the membrane as a helical segment. Topologically, residues 227-271 (LIYDFILAPRSSDLTDRVKVWTSGQVEEYDLDGDDINSRVEMKPK) are cytoplasmic. Phosphoserine is present on S249. Y255 is modified (phosphotyrosine). At S264 the chain carries Phosphoserine.

It belongs to the MIP/aquaporin (TC 1.A.8) family. Homotetramer; each monomer provides an independent water pore. Component of the ankyrin-1 complex in the erythrocyte, composed of ANK1, RHCE, RHAG, SLC4A1, EPB42, GYPA, GYPB and AQP1. Interacts with EPHB2; involved in endolymph production in the inner ear. Identified in a complex with STOM. Interacts (via the N-terminal) with ANK1 (via ANK 1-5 repeats). Interacts (via the C-terminal) with EPB42.

The protein resides in the cell membrane. The enzyme catalyses H2O(in) = H2O(out). The catalysed reaction is nitric oxide(out) = nitric oxide(in). It catalyses the reaction CO2(out) = CO2(in). It carries out the reaction glycerol(in) = glycerol(out). The enzyme catalyses H2O2(out) = H2O2(in). The catalysed reaction is K(+)(in) = K(+)(out). It catalyses the reaction Na(+)(in) = Na(+)(out). Its function is as follows. Forms a water channel that facilitates the transport of water across cell membranes, playing a crucial role in water homeostasis in various tissues. Could also be permeable to small solutes including hydrogen peroxide, glycerol and gases such as amonnia (NH3), nitric oxide (NO) and carbon dioxide (CO2). Recruited to the ankyrin-1 complex, a multiprotein complex of the erythrocyte membrane, it could be part of a CO2 metabolon, linking facilitated diffusion of CO2 across the membrane, anion exchange of Cl(-)/HCO3(-) and interconversion of dissolved CO2 and carbonic acid in the cytosol. In vitro, it shows non-selective gated cation channel activity and may be permeable to cations like K(+) and Na(+) in vivo. This is Aquaporin-1 from Sus scrofa (Pig).